A 208-amino-acid chain; its full sequence is uncharacterized protein (208 aa).

The N-terminal stretch at 1-16 is a signal peptide; that stretch reads MKFLLIACLAVPAILA. N-linked (GlcNAc...) asparagine glycosylation is present at N79.

This is an uncharacterized protein from Caenorhabditis elegans.